Reading from the N-terminus, the 225-residue chain is Uracil-DNA glycosylase (225 aa).

Catalysis depends on D67, which acts as the Proton acceptor.

This sequence belongs to the uracil-DNA glycosylase (UDG) superfamily. UNG family.

The protein resides in the cytoplasm. It catalyses the reaction Hydrolyzes single-stranded DNA or mismatched double-stranded DNA and polynucleotides, releasing free uracil.. Functionally, excises uracil residues from the DNA which can arise as a result of misincorporation of dUMP residues by DNA polymerase or due to deamination of cytosine. The polypeptide is Uracil-DNA glycosylase (Coxiella burnetii (strain Dugway 5J108-111)).